A 332-amino-acid polypeptide reads, in one-letter code: Long form salivary protein D7L2 (332 aa).

The first 21 residues, 1 to 21, serve as a signal peptide directing secretion; it reads MFPPRKFLLSSFILAALHVTA. Intrachain disulfides connect Cys-40–Cys-77 and Cys-73–Cys-133. Position 61 (Trp-61) interacts with leukotriene E4. Leukotriene E4 is bound by residues Gly-157 and Lys-176. Disulfide bonds link Cys-184–Cys-219, Cys-200–Cys-331, and Cys-259–Cys-278. Noradrenaline contacts are provided by Glu-185, Arg-203, and His-216. Positions 294 and 297 each coordinate noradrenaline.

The protein belongs to the PBP/GOBP family. As to quaternary structure, interacts with human CD4. As to expression, saliva (at protein level). Female salivary gland (at protein level). Detected in the head and thorax of the female mosquitoes, where the salivary glands are located.

The protein resides in the secreted. In terms of biological role, modulates blood feeding of female mosquitoes on vertebrate species by binding and sequestering different mediators involved in the host response, such as biogenic amines and eicosanoids. Binds serotonin, histamine, tryptamine, noradrenaline, leukotriene B4, leukotriene C4, leukotriene D4, leukotriene E4 and U-46619, a stable analog of thromboxane A2. Does not bind adrenaline. Exhibits vasodilating activity. Inhibits agonist-induced platelet aggregation but not blood clotting. Its function is as follows. (Microbial infection) Probably promotes Plasmodium gallinaceum oocyst development in mosquito midgut. This Aedes aegypti (Yellowfever mosquito) protein is Long form salivary protein D7L2.